A 417-amino-acid polypeptide reads, in one-letter code: uncharacterized protein (417 aa).

This is an uncharacterized protein from Sulfolobus islandicus rod-shaped virus 1 (SIRV-1).